The primary structure comprises 369 residues: Peptide chain release factor 2 (369 aa).

N5-methylglutamine is present on Gln-249.

The protein belongs to the prokaryotic/mitochondrial release factor family. In terms of processing, methylated by PrmC. Methylation increases the termination efficiency of RF2.

It localises to the cytoplasm. Functionally, peptide chain release factor 2 directs the termination of translation in response to the peptide chain termination codons UGA and UAA. The polypeptide is Peptide chain release factor 2 (Corynebacterium diphtheriae (strain ATCC 700971 / NCTC 13129 / Biotype gravis)).